We begin with the raw amino-acid sequence, 209 residues long: MSKVTEITHPLILHKLAFIRDKNTGSKDFRELVSEVSMLMAYEVTRNLPMEEIEIETPVCKTKCKVLAGKKVAIVPILRAGLGMVDGMLQLIPAAKVGHIGLYRDEETLQPVEYFCKLPQDIAERDIIVVDPMLATGGSATDAITLLKKRGAKQIRLMCLISSPEGIEFVQKAHPDVDIYVACIDEKLNDHGYIVPGLGDAGDRLFGTK.

5-phospho-alpha-D-ribose 1-diphosphate-binding positions include Arg-79, Arg-104, and 131–139; that span reads DPMLATGGS. Uracil is bound by residues Ile-194 and 199–201; that span reads GDA. Asp-200 contributes to the 5-phospho-alpha-D-ribose 1-diphosphate binding site.

This sequence belongs to the UPRTase family. Mg(2+) serves as cofactor.

It carries out the reaction UMP + diphosphate = 5-phospho-alpha-D-ribose 1-diphosphate + uracil. It participates in pyrimidine metabolism; UMP biosynthesis via salvage pathway; UMP from uracil: step 1/1. Allosterically activated by GTP. In terms of biological role, catalyzes the conversion of uracil and 5-phospho-alpha-D-ribose 1-diphosphate (PRPP) to UMP and diphosphate. The protein is Uracil phosphoribosyltransferase of Clostridium perfringens (strain SM101 / Type A).